The sequence spans 132 residues: Ribonuclease P protein component (132 aa).

Belongs to the RnpA family. Consists of a catalytic RNA component (M1 or rnpB) and a protein subunit.

It carries out the reaction Endonucleolytic cleavage of RNA, removing 5'-extranucleotides from tRNA precursor.. Functionally, RNaseP catalyzes the removal of the 5'-leader sequence from pre-tRNA to produce the mature 5'-terminus. It can also cleave other RNA substrates such as 4.5S RNA. The protein component plays an auxiliary but essential role in vivo by binding to the 5'-leader sequence and broadening the substrate specificity of the ribozyme. This chain is Ribonuclease P protein component, found in Marinomonas sp. (strain MWYL1).